Reading from the N-terminus, the 197-residue chain is Large ribosomal subunit protein uL5 (197 aa).

This sequence belongs to the universal ribosomal protein uL5 family. Part of the 50S ribosomal subunit; contacts the 5S rRNA and probably tRNA. Forms a bridge to the 30S subunit in the 70S ribosome.

Functionally, this is one of the proteins that bind and probably mediate the attachment of the 5S RNA into the large ribosomal subunit, where it forms part of the central protuberance. In the 70S ribosome it contacts protein S13 of the 30S subunit (bridge B1b), connecting the 2 subunits; this bridge is implicated in subunit movement. May contact the P site tRNA; the 5S rRNA and some of its associated proteins might help stabilize positioning of ribosome-bound tRNAs. The polypeptide is Large ribosomal subunit protein uL5 (Caldivirga maquilingensis (strain ATCC 700844 / DSM 13496 / JCM 10307 / IC-167)).